Reading from the N-terminus, the 463-residue chain is Glutamate--tRNA ligase 1 (463 aa).

A 'HIGH' region motif is present at residues 10 to 20 (PSPTGYLHIGG). Residues 238–242 (KLSKR) carry the 'KMSKS' region motif. Lysine 241 is a binding site for ATP.

This sequence belongs to the class-I aminoacyl-tRNA synthetase family. Glutamate--tRNA ligase type 1 subfamily. As to quaternary structure, monomer.

Its subcellular location is the cytoplasm. It carries out the reaction tRNA(Glu) + L-glutamate + ATP = L-glutamyl-tRNA(Glu) + AMP + diphosphate. Functionally, catalyzes the attachment of glutamate to tRNA(Glu) in a two-step reaction: glutamate is first activated by ATP to form Glu-AMP and then transferred to the acceptor end of tRNA(Glu). The protein is Glutamate--tRNA ligase 1 of Helicobacter pylori (strain HPAG1).